Here is an 817-residue protein sequence, read N- to C-terminus: E3 ubiquitin-protein ligase TRIM9 (817 aa).

The segment at 10 to 50 (CPVCGSFYREPIILPCSHNLCQACARNILVQTPESESPQSR) adopts an RING-type zinc-finger fold. T41 is modified (phosphothreonine). S44, S46, S49, and S53 each carry phosphoserine. 2 B box-type zinc fingers span residues 163–212 (AAAL…LVPP) and 224–266 (RKVS…VKAL). Residues C168, C171, C193, H198, C229, H232, C252, and H258 each coordinate Zn(2+). A coiled-coil region spans residues 273-340 (HKSQLSQALN…KAQLLARVNK (68 aa)). Residues 374–432 (IKENDPSGFLQISDALIRRVHLTEDQWGKGTLTPRMTTDFDLSLDNSPLLQSIHQLDFV) enclose the COS domain. Residues 440–535 (VPATPILQLE…KTLVLQTSEA (96 aa)) form the Fibronectin type-III domain. The tract at residues 535–557 (AAGAHETKPMKDTDSEEQTLPFP) is disordered. The span at 537–547 (GAHETKPMKDT) shows a compositional bias: basic and acidic residues. The B30.2/SPRY domain maps to 613–794 (ETQSASYSQL…VQVSLWAPGL (182 aa)).

The protein belongs to the TRIM/RBCC family. In terms of assembly, interacts with SNAP25. In terms of processing, auto-ubiquitinated. Brain. Expression is higher in the cerebral cortex and hippocampus (at protein level). Its expression is mainly confined to the central nervous system. The developing neocortex, the dorsal thalamus, the midbrain, the basal area of the hindbrain and spinal cord show high level of expression during embryogenesis. In adult brain, it is detected in the Purkinje cells of the cerebellum, in the hippocampus, and in the cortex.

The protein localises to the cytoplasm. Its subcellular location is the cell projection. It localises to the dendrite. The protein resides in the cytoplasmic vesicle. It is found in the secretory vesicle. The protein localises to the synaptic vesicle. Its subcellular location is the synapse. It localises to the cytoskeleton. It carries out the reaction S-ubiquitinyl-[E2 ubiquitin-conjugating enzyme]-L-cysteine + [acceptor protein]-L-lysine = [E2 ubiquitin-conjugating enzyme]-L-cysteine + N(6)-ubiquitinyl-[acceptor protein]-L-lysine.. The protein operates within protein modification; protein ubiquitination. E3 ubiquitin-protein ligase which ubiquitinates itself in cooperation with an E2 enzyme UBE2D2/UBC4 and serves as a targeting signal for proteasomal degradation. May play a role in regulation of neuronal functions. May act as a regulator of synaptic vesicle exocytosis by controlling the availability of SNAP25 for the SNARE complex formation. This is E3 ubiquitin-protein ligase TRIM9 (Trim9) from Mus musculus (Mouse).